The following is a 361-amino-acid chain: 5-formaminoimidazole-4-carboxamide-1-(beta)-D-ribofuranosyl 5'-monophosphate synthetase (361 aa).

5-amino-1-(5-phospho-beta-D-ribosyl)imidazole-4-carboxamide is bound by residues His-27 and Ser-94. One can recognise an ATP-grasp domain in the interval 116 to 348 (RQILRWEAER…MGQRIAKEIK (233 aa)). Residues 146–208 (PDEI…TNYC) and Glu-230 each bind ATP. 5-amino-1-(5-phospho-beta-D-ribosyl)imidazole-4-carboxamide is bound at residue Asn-258. 2 residues coordinate Mg(2+): Gln-297 and Glu-310.

The protein belongs to the phosphohexose mutase family. Mg(2+) is required as a cofactor. The cofactor is Mn(2+).

It carries out the reaction 5-amino-1-(5-phospho-beta-D-ribosyl)imidazole-4-carboxamide + formate + ATP = 5-formamido-1-(5-phospho-D-ribosyl)imidazole-4-carboxamide + ADP + phosphate. Its pathway is purine metabolism; IMP biosynthesis via de novo pathway; 5-formamido-1-(5-phospho-D-ribosyl)imidazole-4-carboxamide from 5-amino-1-(5-phospho-D-ribosyl)imidazole-4-carboxamide (formate route): step 1/1. Functionally, catalyzes the ATP- and formate-dependent formylation of 5-aminoimidazole-4-carboxamide-1-beta-d-ribofuranosyl 5'-monophosphate (AICAR) to 5-formaminoimidazole-4-carboxamide-1-beta-d-ribofuranosyl 5'-monophosphate (FAICAR) in the absence of folates. In Methanococcus aeolicus (strain ATCC BAA-1280 / DSM 17508 / OCM 812 / Nankai-3), this protein is 5-formaminoimidazole-4-carboxamide-1-(beta)-D-ribofuranosyl 5'-monophosphate synthetase.